The following is a 1188-amino-acid chain: Probable RNA helicase armi (1188 aa).

ATP is bound at residue 723 to 730 (GPPGSGKT). The DEAG box signature appears at 862–865 (DEAG).

The protein belongs to the DNA2/NAM7 helicase family. SDE3 subfamily. As to quaternary structure, forms a complex with piwi and fs(1)Yb; this interaction is required for proper piRNA loading and nuclear localization of piwi. The interaction of piwi and fs(1)Yb is likely to occur via armi. As to expression, abundant in oocytes and syncytial blastoderm. Expressed at low level throughout development, including somatic tissues. First apparent early in oogenesis, in the cytoplasm of stem cells and mitotically dividing cystoblasts. In regions 2a and 2b of the germarium, it is most concentrated in the center of the germline cysts, where the pro-oocyte is located. In stage 1 and early stage 2 egg chambers, it accumulates at the anterior of the oocyte, near the ring canals. It also extends through the ring canals forming a branched structure that links the early oocyte with adjacent nurse cells. In stage 3 cysts, it accumulates at the posterior cortex and localizes to extensions that pass through the oocyte into the nurse cells. Through stages 4 to 7, it continues to be somewhat enriched at the posterior cortex of the oocyte, but at significantly lower level. In stage 9 to 10 egg chambers, it is found throughout the cytoplasm of the oocyte and nurse cells, with slight enrichment at the oocyte cortex.

Its subcellular location is the cytoplasm. It catalyses the reaction ATP + H2O = ADP + phosphate + H(+). In terms of biological role, probable RNA helicase required for axial polarization of the oocyte during early and mid oogenesis. Plays a central role in RNA interference (RNAi) process, a process that mediates mRNA destruction of translational repression. Required for the assembly of the RISC complex, a complex required for target RNA destruction or repression. May be required in the RISC assembly to unwind miRNAs, in the production of single-stranded miRNA from the double-stranded miRNA, a key step in RISC formation. Required both for the translational control of oskar (osk) mRNA and cytoskeletal polarization in the oocyte. Required for somatic primary piRNA biogenesis. Involved in repression of long interspersed nuclear elements (LINEs) including HeT-A, I-element and TART LINEs. The sequence is that of Probable RNA helicase armi from Drosophila melanogaster (Fruit fly).